The following is a 177-amino-acid chain: MTPQLIEILSADEIRRTITRLASEVIEKSGDLNNLILIGIYTRGVPLANLIASQIESLEGVKVPVGAIDITFYRDDLDRIKTRTPAKTKMPLDVTGKTVILVDDVIYKGRTIRAAFNAIIEYGRPQKIRLLVLVDRGHRELPIHPDFTGKKLPTAAEEQVKVYLQEIDGKDGVELIK.

The PRPP-binding signature appears at 99–111 (VILVDDVIYKGRT).

The protein belongs to the purine/pyrimidine phosphoribosyltransferase family. PyrR subfamily.

It catalyses the reaction UMP + diphosphate = 5-phospho-alpha-D-ribose 1-diphosphate + uracil. Its function is as follows. Regulates the transcription of the pyrimidine nucleotide (pyr) operon in response to exogenous pyrimidines. Also displays a weak uracil phosphoribosyltransferase activity which is not physiologically significant. In Microcystis aeruginosa (strain NIES-843 / IAM M-2473), this protein is Bifunctional protein PyrR.